The following is a 170-amino-acid chain: F107 fimbrial protein (170 aa).

The N-terminal stretch at 1 to 21 (MKRLVFISFVALSMTAGSAMA) is a signal peptide. Cysteines 37 and 78 form a disulfide.

This sequence belongs to the fimbrial protein family.

It is found in the fimbrium. Its function is as follows. Fimbriae (also called pili), polar filaments radiating from the surface of the bacterium to a length of 0.5-1.5 micrometers and numbering 100-300 per cell, enable bacteria to colonize the epithelium of specific host organs. This is F107 fimbrial protein (fedA) from Escherichia coli.